The primary structure comprises 74 residues: Anionic peptide clone 9 (74 aa).

The first 24 residues, 1 to 24, serve as a signal peptide directing secretion; sequence MVSKSLIVLLLVSVLVSTFFTTEA.

Belongs to the non-disulfide-bridged peptide (NDBP) superfamily. Long chain multifunctional peptide (group 2) family. As to expression, expressed by the venom gland.

Its subcellular location is the secreted. Its function is as follows. May be an antimicrobial peptide. This Tityus costatus (Brazilian scorpion) protein is Anionic peptide clone 9.